A 103-amino-acid polypeptide reads, in one-letter code: Astacin-like peptidase p16 (103 aa).

Residues 1–103 (NAIPGQHYRW…DAFSRDGSPM (103 aa)) form the Peptidase M12A domain.

Zn(2+) serves as cofactor.

Active against casein. Has a role as a digestive enzyme. This chain is Astacin-like peptidase p16, found in Argiope aurantia (Black-and-yellow garden spider).